The chain runs to 449 residues: MKMNINKACDLKSISVFPPNLRRSAEPQASQQLRSQQSQQSFSQGPSSSQRGCGGFSQMTQSSIDELLINDQRFSSQERDLSLKKVSSCLPPINHKREDSQLVASRSSSGLSRRWSSASIGESKSQISEELEQRFGMMETSLSRFGMMLDSIQSDIMQANRGTKEVFLETERIQQKLTLQDTSLQQLRKEQADSKASLDGGVKFILEEFSKDPNQEKLQKILQMLTTIPEQVETALQKIQREICHTFTREIQVLASLRTPEPRVRVPTAPQVKAKENLPEQRGQAAKVLTSLKMPEPRVQVPAAPQAKENFPEQRGPVAKSNSFCNTTLKTKQPQFPRNPNDASARAVKPYLSPKIQVGCWKTVKPEKSNFKKRATRKPVKSESTRTQFEQCSVVIDSDEEDIDGGFSCLINENTRGTNFEWDAEKETERILRTARRTKRKFGNPIIIN.

Residues 21 to 56 (LRRSAEPQASQQLRSQQSQQSFSQGPSSSQRGCGGF) form a disordered region. Residues 28 to 50 (QASQQLRSQQSQQSFSQGPSSSQ) are compositionally biased toward low complexity. Positions 437 to 441 (RTKRK) match the Nuclear localization signal motif.

As to quaternary structure, interacts with PRD1; this interaction facilitates a binding to DFO.

Its subcellular location is the nucleus. Functionally, involved in DNA cleavage that forms the double-strand breaks (DSB) that initiate meiotic recombination. This is Putative recombination initiation defects 3 from Arabidopsis thaliana (Mouse-ear cress).